The sequence spans 135 residues: Large ribosomal subunit protein uL16c (135 aa).

It belongs to the universal ribosomal protein uL16 family. In terms of assembly, part of the 50S ribosomal subunit.

The protein localises to the plastid. It localises to the chloroplast. This Nymphaea alba (White water-lily) protein is Large ribosomal subunit protein uL16c.